The following is a 325-amino-acid chain: Phosphatidylserine decarboxylase proenzyme (325 aa).

Residues Asp90, His147, and Ser253 each act as charge relay system; for autoendoproteolytic cleavage activity in the active site. Ser253 serves as the catalytic Schiff-base intermediate with substrate; via pyruvic acid; for decarboxylase activity. Ser253 carries the pyruvic acid (Ser); by autocatalysis modification. Residues 281–325 (MASKMSSQKAITPEQTTETPVQASNEFDDNAGETKKDTPSEGADS) are disordered. The span at 284–305 (KMSSQKAITPEQTTETPVQASN) shows a compositional bias: polar residues.

This sequence belongs to the phosphatidylserine decarboxylase family. PSD-B subfamily. Prokaryotic type I sub-subfamily. In terms of assembly, heterodimer of a large membrane-associated beta subunit and a small pyruvoyl-containing alpha subunit. It depends on pyruvate as a cofactor. In terms of processing, is synthesized initially as an inactive proenzyme. Formation of the active enzyme involves a self-maturation process in which the active site pyruvoyl group is generated from an internal serine residue via an autocatalytic post-translational modification. Two non-identical subunits are generated from the proenzyme in this reaction, and the pyruvate is formed at the N-terminus of the alpha chain, which is derived from the carboxyl end of the proenzyme. The autoendoproteolytic cleavage occurs by a canonical serine protease mechanism, in which the side chain hydroxyl group of the serine supplies its oxygen atom to form the C-terminus of the beta chain, while the remainder of the serine residue undergoes an oxidative deamination to produce ammonia and the pyruvoyl prosthetic group on the alpha chain. During this reaction, the Ser that is part of the protease active site of the proenzyme becomes the pyruvoyl prosthetic group, which constitutes an essential element of the active site of the mature decarboxylase.

It is found in the cell membrane. It carries out the reaction a 1,2-diacyl-sn-glycero-3-phospho-L-serine + H(+) = a 1,2-diacyl-sn-glycero-3-phosphoethanolamine + CO2. Its pathway is phospholipid metabolism; phosphatidylethanolamine biosynthesis; phosphatidylethanolamine from CDP-diacylglycerol: step 2/2. Its function is as follows. Catalyzes the formation of phosphatidylethanolamine (PtdEtn) from phosphatidylserine (PtdSer). The protein is Phosphatidylserine decarboxylase proenzyme of Alteromonas mediterranea (strain DSM 17117 / CIP 110805 / LMG 28347 / Deep ecotype).